The following is a 557-amino-acid chain: 2-succinyl-5-enolpyruvyl-6-hydroxy-3-cyclohexene-1-carboxylate synthase (557 aa).

The protein belongs to the TPP enzyme family. MenD subfamily. As to quaternary structure, homodimer. The cofactor is Mg(2+). It depends on Mn(2+) as a cofactor. Thiamine diphosphate is required as a cofactor.

The enzyme catalyses isochorismate + 2-oxoglutarate + H(+) = 5-enolpyruvoyl-6-hydroxy-2-succinyl-cyclohex-3-ene-1-carboxylate + CO2. The protein operates within quinol/quinone metabolism; 1,4-dihydroxy-2-naphthoate biosynthesis; 1,4-dihydroxy-2-naphthoate from chorismate: step 2/7. It participates in quinol/quinone metabolism; menaquinone biosynthesis. Catalyzes the thiamine diphosphate-dependent decarboxylation of 2-oxoglutarate and the subsequent addition of the resulting succinic semialdehyde-thiamine pyrophosphate anion to isochorismate to yield 2-succinyl-5-enolpyruvyl-6-hydroxy-3-cyclohexene-1-carboxylate (SEPHCHC). The chain is 2-succinyl-5-enolpyruvyl-6-hydroxy-3-cyclohexene-1-carboxylate synthase from Phocaeicola vulgatus (strain ATCC 8482 / DSM 1447 / JCM 5826 / CCUG 4940 / NBRC 14291 / NCTC 11154) (Bacteroides vulgatus).